Consider the following 180-residue polypeptide: NAD(P)H-quinone oxidoreductase subunit J (180 aa).

Polar residues predominate over residues 1-16; that stretch reads MNEETQTSELTNTDQG. The disordered stretch occupies residues 1 to 23; sequence MNEETQTSELTNTDQGPQIEPGP.

Belongs to the complex I 30 kDa subunit family. NDH-1 can be composed of about 15 different subunits; different subcomplexes with different compositions have been identified which probably have different functions.

It is found in the cellular thylakoid membrane. The enzyme catalyses a plastoquinone + NADH + (n+1) H(+)(in) = a plastoquinol + NAD(+) + n H(+)(out). The catalysed reaction is a plastoquinone + NADPH + (n+1) H(+)(in) = a plastoquinol + NADP(+) + n H(+)(out). NDH-1 shuttles electrons from an unknown electron donor, via FMN and iron-sulfur (Fe-S) centers, to quinones in the respiratory and/or the photosynthetic chain. The immediate electron acceptor for the enzyme in this species is believed to be plastoquinone. Couples the redox reaction to proton translocation, and thus conserves the redox energy in a proton gradient. Cyanobacterial NDH-1 also plays a role in inorganic carbon-concentration. The protein is NAD(P)H-quinone oxidoreductase subunit J of Prochlorococcus marinus (strain MIT 9211).